The following is a 141-amino-acid chain: Hemoglobin subunit mu (141 aa).

The region spanning 1-141 (MLSAQERAQI…VAVVLTEKYR (141 aa)) is the Globin domain. Residues H58 and H87 each coordinate heme b.

This sequence belongs to the globin family. As to expression, expressed in erythroid tissues.

In Homo sapiens (Human), this protein is Hemoglobin subunit mu (HBM).